The following is a 101-amino-acid chain: Small ribosomal subunit protein uS14 (101 aa).

It belongs to the universal ribosomal protein uS14 family. Part of the 30S ribosomal subunit. Contacts proteins S3 and S10.

Binds 16S rRNA, required for the assembly of 30S particles and may also be responsible for determining the conformation of the 16S rRNA at the A site. This chain is Small ribosomal subunit protein uS14, found in Dinoroseobacter shibae (strain DSM 16493 / NCIMB 14021 / DFL 12).